Reading from the N-terminus, the 98-residue chain is NADH-ubiquinone oxidoreductase chain 4L (98 aa).

3 helical membrane-spanning segments follow: residues 1 to 21 (MSLT…GLLM), 29 to 49 (SLLC…VIIL), and 61 to 81 (IILL…LVMV).

Belongs to the complex I subunit 4L family. In terms of assembly, core subunit of respiratory chain NADH dehydrogenase (Complex I) which is composed of 45 different subunits.

The protein resides in the mitochondrion inner membrane. The catalysed reaction is a ubiquinone + NADH + 5 H(+)(in) = a ubiquinol + NAD(+) + 4 H(+)(out). Functionally, core subunit of the mitochondrial membrane respiratory chain NADH dehydrogenase (Complex I) which catalyzes electron transfer from NADH through the respiratory chain, using ubiquinone as an electron acceptor. Part of the enzyme membrane arm which is embedded in the lipid bilayer and involved in proton translocation. The polypeptide is NADH-ubiquinone oxidoreductase chain 4L (MT-ND4L) (Uroderma bilobatum (Tent-making bat)).